The primary structure comprises 394 residues: Flavohemoprotein (394 aa).

Residues 1–138 (MLTQEHINII…LAQVFIDREG (138 aa)) form the Globin domain. His-85 lines the heme b pocket. Catalysis depends on charge relay system residues Tyr-95 and Glu-137. A reductase region spans residues 149–394 (GGWRDGRTFV…VFGPHAQLAA (246 aa)). The FAD-binding FR-type domain maps to 152–262 (RDGRTFVVRE…YAPAGDFFYV (111 aa)). FAD is bound by residues Tyr-190 and 206-209 (RQYS). Residue 274–279 (GVGATP) coordinates NADP(+). 385–388 (VFGP) provides a ligand contact to FAD.

The protein belongs to the globin family. Two-domain flavohemoproteins subfamily. In the C-terminal section; belongs to the flavoprotein pyridine nucleotide cytochrome reductase family. Requires heme b as cofactor. FAD serves as cofactor.

It carries out the reaction 2 nitric oxide + NADPH + 2 O2 = 2 nitrate + NADP(+) + H(+). The catalysed reaction is 2 nitric oxide + NADH + 2 O2 = 2 nitrate + NAD(+) + H(+). Its function is as follows. Is involved in NO detoxification in an aerobic process, termed nitric oxide dioxygenase (NOD) reaction that utilizes O(2) and NAD(P)H to convert NO to nitrate, which protects the bacterium from various noxious nitrogen compounds. Therefore, plays a central role in the inducible response to nitrosative stress. The protein is Flavohemoprotein (hmp) of Vibrio cholerae serotype O1 (strain ATCC 39315 / El Tor Inaba N16961).